A 577-amino-acid chain; its full sequence is Arginine--tRNA ligase (577 aa).

Positions 122–132 (PNVAKEMHVGH) match the 'HIGH' region motif.

Belongs to the class-I aminoacyl-tRNA synthetase family. In terms of assembly, monomer.

Its subcellular location is the cytoplasm. It carries out the reaction tRNA(Arg) + L-arginine + ATP = L-arginyl-tRNA(Arg) + AMP + diphosphate. The protein is Arginine--tRNA ligase of Klebsiella pneumoniae (strain 342).